We begin with the raw amino-acid sequence, 263 residues long: Esterase mokD (263 aa).

Residues Ser-134, Asp-208, and His-236 each act as charge relay system in the active site.

Belongs to the LovG family.

The enzyme catalyses dihydromonacolin L-[lovastatin nonaketide synthase] + H2O = holo-[lovastatin nonaketide synthase] + dihydromonacolin L carboxylate + H(+). It participates in polyketide biosynthesis; lovastatin biosynthesis. In terms of biological role, esterase; part of the gene cluster that mediates the biosynthesis of monakolin K, also known as lovastatin, and which acts as a potent competitive inhibitor of HMG-CoA reductase. Monakolin K biosynthesis is performed in two stages. The first stage is catalyzed by the nonaketide synthase mokA, which belongs to type I polyketide synthases and catalyzes the iterative nine-step formation of the polyketide. This PKS stage completed by the action of dehydrogenase mokE, which catalyzes the NADPH-dependent reduction of the unsaturated tetra-, penta- and heptaketide intermediates that arise during the mokA-mediated biosynthesis of the nonaketide chain and leads to dihydromonacolin L. Covalently bound dihydromonacolin L is released from mokA by the mokD esterase. Conversion of dihydromonacolin L into monacolin L and then monacolin J is subsequently performed with the participation of molecular oxygen and P450 monoogygenase mokC. Finally, mokF performs the conversion of monacoline J to monacoline K through the addition of the side-chain diketide moiety (2R)-2-methylbutanoate produced by the diketide synthase mokB. In Monascus pilosus (Red mold), this protein is Esterase mokD.